The primary structure comprises 463 residues: MAIAENYDEVLKGKYPAKDHARKVAKWIVDKGGDKKGTIYLEAQKQKLNEDNDGEAPFRQRRYFFYLSGCELPDSYLTYDFPSDKLTLFIPPVEPEEVIWSGLPMSPEEAKAKYDIDDCKTTKEVNPHLASSSETAQSTIYAIPGQISDETTFLSYQNKDLEQLKTAIEYCRVTKSDYEIALIRKANVISTNAHINVMKAAAKAQNECELEAVFLKSCVERNAKNQAYHSIVAAGENGATLHYVHNAAPIKSQNLMLLDAGCEVDCYASDITRTFPIKGTFTDESLAIYKIVLDMQKQCINALKAGVLWDSIHELAHKIAIKGLLELGILKGDVEQIFKARTSVAFFPHGLGHYLGMDTHDTGGNANYADKDRMFRYLRVRGTLPARSVITVEPGIYFCRFIIEPYLKDDQQKQYIDEKVLEKYWSVGGVRIEDNILVTEDGIENLTPTPKEIDEITSLVKSG.

Residues Asp-259, Asp-270, Glu-393, and Glu-433 each contribute to the Mn(2+) site.

This sequence belongs to the peptidase M24B family. Mn(2+) serves as cofactor.

It carries out the reaction Release of any N-terminal amino acid, including proline, that is linked to proline, even from a dipeptide or tripeptide.. Catalyzes the removal of a penultimate prolyl residue from the N-termini of peptides. The polypeptide is Probable Xaa-Pro aminopeptidase PEPP (PEPP) (Phaeosphaeria nodorum (strain SN15 / ATCC MYA-4574 / FGSC 10173) (Glume blotch fungus)).